The following is a 112-amino-acid chain: Putative pterin-4-alpha-carbinolamine dehydratase (112 aa).

This sequence belongs to the pterin-4-alpha-carbinolamine dehydratase family.

The enzyme catalyses (4aS,6R)-4a-hydroxy-L-erythro-5,6,7,8-tetrahydrobiopterin = (6R)-L-erythro-6,7-dihydrobiopterin + H2O. This is Putative pterin-4-alpha-carbinolamine dehydratase from Shewanella halifaxensis (strain HAW-EB4).